The primary structure comprises 314 residues: Homeobox protein DBX1-A (314 aa).

Residues 175 to 234 (GMLRRAVFSDVQRKALEKMFQKQKYISKPDRKKLAAKLGLKDSQVKIWFQNRRMKWRNSK) constitute a DNA-binding region (homeobox). Disordered stretches follow at residues 234 to 279 (KERE…CAPS) and 292 to 314 (STDSSITFKHSDFSESEDEITVS). A compositionally biased stretch (basic and acidic residues) spans 258–267 (DLSDVGKKSS). A compositionally biased stretch (acidic residues) spans 305–314 (SESEDEITVS).

This sequence belongs to the H2.0 homeobox family.

The protein localises to the nucleus. This Danio rerio (Zebrafish) protein is Homeobox protein DBX1-A (dbx1a).